Here is a 350-residue protein sequence, read N- to C-terminus: MNPPTTSDSAQTQSRKADHIRICLEEDVQFRDTTNGLERYRFTHSCLPEIDRNDIDLSATFLGKKLNAPLLISSMTGGTEEAGIINQRLAGLAQHYKLAMGVGSQRVAVEKPQVADTFAIRKYAPDVLLFANVGAVQLNYKYGLDECLRIIDMLEADALILHINPLQECIQPRGDVNFRGLLDKINQLCSKLPVPAIAKEVGNGISGAMAEKLIAAGVQAIDVAGAGGTSWAKVEGERAENAMQRRLGRTFADWGMPTAECITSVRAIAPHIPLIASGGLRDGLDVAKAIALGADIAGLAMPFLQAAVESEAALQDLTEVLIAEITTVLFCTGNANLDQLKHSGSLQRLQ.

15–16 lines the substrate pocket; the sequence is RK. FMN-binding positions include serine 73, 74–76, serine 104, and asparagine 132; that span reads SMT. A substrate-binding site is contributed by 104–106; it reads SQR. Glutamine 167 is a substrate binding site. A Mg(2+)-binding site is contributed by glutamate 168. FMN-binding positions include lysine 199, threonine 229, 279 to 281, and 300 to 301; these read GLR and AM.

The protein belongs to the IPP isomerase type 2 family. In terms of assembly, homooctamer. Dimer of tetramers. FMN serves as cofactor. The cofactor is NADPH. Mg(2+) is required as a cofactor.

The protein resides in the cytoplasm. It carries out the reaction isopentenyl diphosphate = dimethylallyl diphosphate. In terms of biological role, involved in the biosynthesis of isoprenoids. Catalyzes the 1,3-allylic rearrangement of the homoallylic substrate isopentenyl (IPP) to its allylic isomer, dimethylallyl diphosphate (DMAPP). This is Isopentenyl-diphosphate delta-isomerase from Nostoc sp. (strain PCC 7120 / SAG 25.82 / UTEX 2576).